The following is a 277-amino-acid chain: Homeobox protein Nkx-6.2 (277 aa).

Residues 89–142 (AGVYFGPAAAVARGYPKPLAELPGRPPIFWPGVVQGAPWRDPRLAGPAPAGGVL) are repressor domain. 2 disordered regions span residues 132–155 (LAGP…RPTF) and 210–250 (EMAS…DDEK). Residues 148–207 (KKHSRPTFSGQQIFALEKTFEQTKYLAGPERARLAYSLGMTESQVKVWFQNRRTKWRKRH) constitute a DNA-binding region (homeobox). Over residues 216–226 (KKQDSDAEKLK) the composition is skewed to basic and acidic residues.

In terms of tissue distribution, highest expression in brain.

It is found in the nucleus. Its function is as follows. Transcription factor with repressor activity involved in the regulation of axon-glial interactions at myelin paranodes in oligodendrocytes. Binds to the consensus DNA sequence 5'-(A/T)TTAATGA-3'. In oligodendrocytes, binds to MBP and PLP1 promoter regions. The protein is Homeobox protein Nkx-6.2 (NKX6-2) of Homo sapiens (Human).